A 187-amino-acid chain; its full sequence is dCTP deaminase, dUMP-forming (187 aa).

Residues 101 to 106 (KSSLGR), aspartate 119, 127 to 129 (TLE), glutamine 148, tyrosine 162, lysine 170, and glutamine 174 contribute to the dCTP site. Glutamate 129 (proton donor/acceptor) is an active-site residue.

It belongs to the dCTP deaminase family. Homotrimer.

It catalyses the reaction dCTP + 2 H2O = dUMP + NH4(+) + diphosphate. It participates in pyrimidine metabolism; dUMP biosynthesis; dUMP from dCTP: step 1/1. Bifunctional enzyme that catalyzes both the deamination of dCTP to dUTP and the hydrolysis of dUTP to dUMP without releasing the toxic dUTP intermediate. This chain is dCTP deaminase, dUMP-forming, found in Corynebacterium diphtheriae (strain ATCC 700971 / NCTC 13129 / Biotype gravis).